The chain runs to 291 residues: Taste receptor type 2 member 16 (291 aa).

Methionine 1 is a topological domain (extracellular). A helical transmembrane segment spans residues 2–22 (IPIQLTVFFMIIYVLESLTII). Residues 23–41 (VQSSLIVAVLGREWLQVRR) are Cytoplasmic-facing. A helical membrane pass occupies residues 42–62 (LMPVDMILISLGISRFCLQWA). Residues 63–84 (SMLNNFCSYLNLNYVLCNLTIT) lie on the Extracellular side of the membrane. Residue asparagine 80 is glycosylated (N-linked (GlcNAc...) asparagine). Residues 85 to 105 (WEFFNILTFWLNSLLTVFYCI) form a helical membrane-spanning segment. Topologically, residues 106–125 (KVSSFTHHIFLWVRWRILRW) are cytoplasmic. The chain crosses the membrane as a helical span at residues 126 to 146 (FPWILLGSLTIACVTIIPSAI). Residues 147-182 (GNYIQIQLLTMEHLPRNSTVTDRLEKFHQYQFQSHT) are Extracellular-facing. N-linked (GlcNAc...) asparagine glycosylation is present at asparagine 163. A helical membrane pass occupies residues 183–203 (VALVIPFILFLASTILLMASL). Residues 204-228 (TKQIQHHSTGHCNPSMKAHFTALRS) lie on the Cytoplasmic side of the membrane. A helical membrane pass occupies residues 229–249 (LAILFIVFTSYFLIILITIIG). Residues 250–257 (TLFDKRCW) are Extracellular-facing. The chain crosses the membrane as a helical span at residues 258 to 278 (LWVWEAFVYAFILMHSTSLML). The Cytoplasmic portion of the chain corresponds to 279-291 (SSPTLKRILKGKC).

Belongs to the G-protein coupled receptor T2R family. In terms of assembly, interacts with RTP3 and RTP4.

It localises to the cell membrane. Functionally, receptor that may play a role in the perception of bitterness and is gustducin-linked. May function as a bitter taste receptor for the phytonutrient beta glucopyranosides, some of which are toxic and some of which lower the risk of cancer and cardiovascular disease. The activity of this receptor may stimulate alpha gustducin, mediate PLC-beta-2 activation and lead to the gating of TRPM5. This is Taste receptor type 2 member 16 (TAS2R16) from Pongo pygmaeus (Bornean orangutan).